We begin with the raw amino-acid sequence, 66 residues long: Large ribosomal subunit protein bL32 (66 aa).

A compositionally biased stretch (basic residues) spans 1-18; the sequence is MAIVPKRKTSKQRKHKRR. The interval 1–21 is disordered; that stretch reads MAIVPKRKTSKQRKHKRRTND.

This sequence belongs to the bacterial ribosomal protein bL32 family.

In Mycoplasmopsis agalactiae (strain NCTC 10123 / CIP 59.7 / PG2) (Mycoplasma agalactiae), this protein is Large ribosomal subunit protein bL32.